Consider the following 300-residue polypeptide: Dihydroorotate dehydrogenase B (NAD(+)), catalytic subunit (300 aa).

Residues Ser20 and 44–45 (KG) each bind FMN. Residues Lys44 and 68 to 72 (NAIGL) each bind substrate. Residues Asn98 and Asn125 each coordinate FMN. Asn125 is a substrate binding site. Cys128 functions as the Nucleophile in the catalytic mechanism. Residues Lys163 and Ile189 each coordinate FMN. Residue 190-191 (NT) coordinates substrate. FMN is bound by residues Gly215, 241–242 (GG), and 263–264 (GT).

Belongs to the dihydroorotate dehydrogenase family. Type 1 subfamily. Heterotetramer of 2 PyrK and 2 PyrD type B subunits. Requires FMN as cofactor.

The protein localises to the cytoplasm. It carries out the reaction (S)-dihydroorotate + NAD(+) = orotate + NADH + H(+). Its pathway is pyrimidine metabolism; UMP biosynthesis via de novo pathway; orotate from (S)-dihydroorotate (NAD(+) route): step 1/1. Its function is as follows. Catalyzes the conversion of dihydroorotate to orotate with NAD(+) as electron acceptor. This chain is Dihydroorotate dehydrogenase B (NAD(+)), catalytic subunit (pyrD), found in Lachnoclostridium phytofermentans (strain ATCC 700394 / DSM 18823 / ISDg) (Clostridium phytofermentans).